The following is a 935-amino-acid chain: Formin-I (935 aa).

Residues Q35–Q76 are a coiled coil. Disordered stretches follow at residues S52–S78, L380–P511, and K561–S590. A compositionally biased stretch (low complexity) spans K384–S407. A compositionally biased stretch (polar residues) spans I418–P428. The span at D431–V443 shows a compositional bias: basic and acidic residues. The span at N444–T454 shows a compositional bias: polar residues. The FH1 domain occupies N444–G505. Pro residues predominate over residues S456–S482. Residues L484–N499 show a composition bias toward polar residues. The FH2 domain occupies G506 to K935. Residues N568–N583 are compositionally biased toward low complexity. 2 coiled-coil regions span residues S702–V730 and Q803–L834.

The protein belongs to the formin homology family. Diaphanous subfamily.

Formins play an important role in the nucleation of actin and the formation of linear actin filaments. The polypeptide is Formin-I (forI) (Dictyostelium discoideum (Social amoeba)).